The sequence spans 280 residues: Golgi phosphoprotein 3-like B (280 aa).

Residues 1–32 (MTTLIRRGRRAEEGQERRADSEDSIKDKDEED) are disordered. The span at 10 to 32 (RAEEGQERRADSEDSIKDKDEED) shows a compositional bias: basic and acidic residues. 4 residues coordinate a 1,2-diacyl-sn-glycero-3-phospho-(1D-myo-inositol 4-phosphate): W62, R71, R152, and R155. A beta-hairpin required for oligomerization region spans residues 171-182 (EKQNFLLFDMTT).

Belongs to the GOLPH3/VPS74 family. Homooligomer.

The protein localises to the golgi apparatus. It is found in the golgi stack membrane. Its subcellular location is the trans-Golgi network membrane. Functionally, phosphatidylinositol-4-phosphate-binding protein that may play a role in the process of vesicle budding at the Golgi and anterograde transport to the plasma membrane. The polypeptide is Golgi phosphoprotein 3-like B (golph3l-b) (Xenopus laevis (African clawed frog)).